A 318-amino-acid polypeptide reads, in one-letter code: Ribose-phosphate pyrophosphokinase (318 aa).

Residues 46 to 48 (DGE) and 105 to 106 (RQ) contribute to the ATP site. Mg(2+)-binding residues include His-139 and Asp-178. Lys-201 is a catalytic residue. Residues Arg-203, Asp-227, and 231–235 (DTAGT) each bind D-ribose 5-phosphate.

Belongs to the ribose-phosphate pyrophosphokinase family. Class I subfamily. In terms of assembly, homohexamer. It depends on Mg(2+) as a cofactor.

The protein localises to the cytoplasm. It catalyses the reaction D-ribose 5-phosphate + ATP = 5-phospho-alpha-D-ribose 1-diphosphate + AMP + H(+). The protein operates within metabolic intermediate biosynthesis; 5-phospho-alpha-D-ribose 1-diphosphate biosynthesis; 5-phospho-alpha-D-ribose 1-diphosphate from D-ribose 5-phosphate (route I): step 1/1. In terms of biological role, involved in the biosynthesis of the central metabolite phospho-alpha-D-ribosyl-1-pyrophosphate (PRPP) via the transfer of pyrophosphoryl group from ATP to 1-hydroxyl of ribose-5-phosphate (Rib-5-P). This chain is Ribose-phosphate pyrophosphokinase, found in Helicobacter pylori (strain J99 / ATCC 700824) (Campylobacter pylori J99).